A 1003-amino-acid polypeptide reads, in one-letter code: Glutamate receptor ionotropic, NMDA 3B (1003 aa).

Residues 1–24 (MECVQTLWLSLALALARGSWVVRG) form the signal peptide. The Extracellular segment spans residues 25–574 (HPQPCGVPTR…PIGAFMWPLH (550 aa)). 5 N-linked (GlcNAc...) asparagine glycosylation sites follow: asparagine 69, asparagine 212, asparagine 344, asparagine 451, and asparagine 465. Intrachain disulfides connect cysteine 439–cysteine 475 and cysteine 445–cysteine 476. Glycine-binding residues include serine 531, serine 533, and arginine 538. 2 residues coordinate D-serine: serine 533 and arginine 538. The helical transmembrane segment at 575-594 (WSMWVGVFAALHLTALFLTL) threads the bilayer. The Cytoplasmic segment spans residues 595-615 (YEWRSPYGLTPRGRNRGTVFS). Positions 616-627 (YSSALNLCYAIL) form an intramembrane region, discontinuously helical. The Cytoplasmic portion of the chain corresponds to 628-641 (FGRTVSSKTPKCPT). Residues 642–661 (GRFLMNLWAIFCLLVLSSYT) form a helical membrane-spanning segment. The Extracellular segment spans residues 662–832 (ANLAAVMVGD…TLQMGVYHLS (171 aa)). Glycine is bound at residue serine 701. Residues serine 701, alanine 702, and aspartate 745 each coordinate D-serine. Aspartate 745 contacts glycine. Asparagine 786 is a glycosylation site (N-linked (GlcNAc...) asparagine). Residues 833-848 (GLFVLLCLGLGSALLT) form a helical membrane-spanning segment. The Cytoplasmic portion of the chain corresponds to 849 to 1003 (SLGEHVFYRL…RLLHAAPAES (155 aa)). Residues 883 to 912 (LNTGPPEGQQERAEQECSGPKEEQPAADGA) form a disordered region. A compositionally biased stretch (basic and acidic residues) spans 891–906 (QQERAEQECSGPKEEQ). Positions 947-986 (SNGPGVQAELRELELRIEAARERLRSALLRRGELRAQLGD) form a coiled coil. Residues 952-985 (VQAELRELELRIEAARERLRSALLRRGELRAQLG) form an involved in the trafficking and surface expression of NMDARs region.

Belongs to the glutamate-gated ion channel (TC 1.A.10.1) family. NR3B/GRIN3B subfamily. In terms of assembly, forms heterotetrameric channels that contain at least two GluN1 subunits and at least a combination of one GluN2 and one GluN3 subunits (in vitro). Forms heterotetrameric channels composed of two GluN1/zeta subunits (GRIN1), and two identical GluN3 subunits (GRIN3A or GRIN3B) (in vitro). Does not form functional homomeric channels. In terms of tissue distribution, expressed in the facial nucleus and the ambiguus nucleus of the brainstem, pons, medulla, spinal cord and cerebellum.

The protein resides in the cell membrane. The protein localises to the postsynaptic cell membrane. It carries out the reaction Ca(2+)(in) = Ca(2+)(out). The catalysed reaction is Na(+)(in) = Na(+)(out). Its function is as follows. Component of a non-conventional N-methyl-D-aspartate (NMDA) receptors (NMDARs) that function as heterotetrameric, ligand-gated cation channels with low calcium permeability and low voltage-dependent block by Mg(2+). Forms glutamatergic receptor complexes with GluN1 and GluN2 subunits which are activated by glycine binding to the GluN1 and GluN3 subunits and L-glutamate binding to GluN2 subunits. Forms excitatory glycinergic receptor complexes with GluN1 alone which are activated by glycine binding to the GluN1 and GluN3 subunits. GluN3B subunit also binds D-serine and, in the absence of glycine, activates glycinergic receptor complexes, but with lower efficacy than glycine. Each GluN3 subunit confers differential attributes to channel properties, including activation, deactivation and desensitization kinetics, pH sensitivity, Ca2(+) permeability, and binding to allosteric modulators. The protein is Glutamate receptor ionotropic, NMDA 3B of Mus musculus (Mouse).